A 510-amino-acid polypeptide reads, in one-letter code: Histidine ammonia-lyase (510 aa).

A cross-link (5-imidazolinone (Ala-Gly)) is located at residues 144–146; it reads ASG. S145 carries the 2,3-didehydroalanine (Ser) modification.

The protein belongs to the PAL/histidase family. Contains an active site 4-methylidene-imidazol-5-one (MIO), which is formed autocatalytically by cyclization and dehydration of residues Ala-Ser-Gly.

Its subcellular location is the cytoplasm. It catalyses the reaction L-histidine = trans-urocanate + NH4(+). The protein operates within amino-acid degradation; L-histidine degradation into L-glutamate; N-formimidoyl-L-glutamate from L-histidine: step 1/3. In Chromobacterium violaceum (strain ATCC 12472 / DSM 30191 / JCM 1249 / CCUG 213 / NBRC 12614 / NCIMB 9131 / NCTC 9757 / MK), this protein is Histidine ammonia-lyase.